Consider the following 417-residue polypeptide: Serine--tRNA ligase (417 aa).

An L-serine-binding site is contributed by 232-234; sequence TSE. An ATP-binding site is contributed by 263-265; sequence RKE. L-serine is bound at residue E286. 350 to 353 serves as a coordination point for ATP; sequence EISS. An L-serine-binding site is contributed by S385.

It belongs to the class-II aminoacyl-tRNA synthetase family. Type-1 seryl-tRNA synthetase subfamily. Homodimer. The tRNA molecule binds across the dimer.

The protein localises to the cytoplasm. The enzyme catalyses tRNA(Ser) + L-serine + ATP = L-seryl-tRNA(Ser) + AMP + diphosphate + H(+). It carries out the reaction tRNA(Sec) + L-serine + ATP = L-seryl-tRNA(Sec) + AMP + diphosphate + H(+). It functions in the pathway aminoacyl-tRNA biosynthesis; selenocysteinyl-tRNA(Sec) biosynthesis; L-seryl-tRNA(Sec) from L-serine and tRNA(Sec): step 1/1. Its function is as follows. Catalyzes the attachment of serine to tRNA(Ser). Is also able to aminoacylate tRNA(Sec) with serine, to form the misacylated tRNA L-seryl-tRNA(Sec), which will be further converted into selenocysteinyl-tRNA(Sec). This Campylobacter hominis (strain ATCC BAA-381 / DSM 21671 / CCUG 45161 / LMG 19568 / NCTC 13146 / CH001A) protein is Serine--tRNA ligase.